The chain runs to 439 residues: GTPase Der (439 aa).

EngA-type G domains lie at P4–E168 and I177–N352. Residues G10–S17, D57–I61, N120–D123, G183–S190, D230–L234, and N295–D298 contribute to the GTP site. Positions K353–K437 constitute a KH-like domain.

Belongs to the TRAFAC class TrmE-Era-EngA-EngB-Septin-like GTPase superfamily. EngA (Der) GTPase family. As to quaternary structure, associates with the 50S ribosomal subunit.

Its function is as follows. GTPase that plays an essential role in the late steps of ribosome biogenesis. In Clostridium botulinum (strain ATCC 19397 / Type A), this protein is GTPase Der.